The chain runs to 832 residues: Valine--tRNA ligase (832 aa).

The short motif at 41-51 is the 'HIGH' region element; sequence PNVTGKLHLGH. Residues 512–516 carry the 'KMSKS' region motif; sequence KMSKS. ATP is bound at residue Lys-515. A coiled-coil region spans residues 760 to 831; it reads FIEISQEQKQ…QIYLEELKWK (72 aa).

It belongs to the class-I aminoacyl-tRNA synthetase family. ValS type 1 subfamily. Monomer.

The protein resides in the cytoplasm. It catalyses the reaction tRNA(Val) + L-valine + ATP = L-valyl-tRNA(Val) + AMP + diphosphate. In terms of biological role, catalyzes the attachment of valine to tRNA(Val). As ValRS can inadvertently accommodate and process structurally similar amino acids such as threonine, to avoid such errors, it has a 'posttransfer' editing activity that hydrolyzes mischarged Thr-tRNA(Val) in a tRNA-dependent manner. The chain is Valine--tRNA ligase from Mycoplasmopsis synoviae (strain 53) (Mycoplasma synoviae).